The sequence spans 404 residues: Cysteine desulfurase IscS (404 aa).

Residues Ala-75–Thr-76, Asn-155, Gln-183, and Ser-203–His-205 each bind pyridoxal 5'-phosphate. Lys-206 carries the N6-(pyridoxal phosphate)lysine modification. Thr-243 lines the pyridoxal 5'-phosphate pocket. Cys-328 acts as the Cysteine persulfide intermediate in catalysis. Cys-328 lines the [2Fe-2S] cluster pocket.

The protein belongs to the class-V pyridoxal-phosphate-dependent aminotransferase family. NifS/IscS subfamily. As to quaternary structure, homodimer. Forms a heterotetramer with IscU, interacts with other sulfur acceptors. Pyridoxal 5'-phosphate serves as cofactor.

Its subcellular location is the cytoplasm. The catalysed reaction is (sulfur carrier)-H + L-cysteine = (sulfur carrier)-SH + L-alanine. The protein operates within cofactor biosynthesis; iron-sulfur cluster biosynthesis. In terms of biological role, master enzyme that delivers sulfur to a number of partners involved in Fe-S cluster assembly, tRNA modification or cofactor biosynthesis. Catalyzes the removal of elemental sulfur and selenium atoms from cysteine and selenocysteine to produce alanine. Functions as a sulfur delivery protein for Fe-S cluster synthesis onto IscU, an Fe-S scaffold assembly protein, as well as other S acceptor proteins. Also functions as a selenium delivery protein in the pathway for the biosynthesis of selenophosphate. The sequence is that of Cysteine desulfurase IscS from Salmonella arizonae (strain ATCC BAA-731 / CDC346-86 / RSK2980).